Here is a 160-residue protein sequence, read N- to C-terminus: 6,7-dimethyl-8-ribityllumazine synthase (160 aa).

5-amino-6-(D-ribitylamino)uracil is bound by residues tryptophan 26, alanine 59–glutamate 61, and valine 81–isoleucine 83. Position 86–87 (glycine 86–threonine 87) interacts with (2S)-2-hydroxy-3-oxobutyl phosphate. Histidine 89 serves as the catalytic Proton donor. 5-amino-6-(D-ribitylamino)uracil is bound at residue phenylalanine 114. Arginine 128 provides a ligand contact to (2S)-2-hydroxy-3-oxobutyl phosphate.

This sequence belongs to the DMRL synthase family.

It carries out the reaction (2S)-2-hydroxy-3-oxobutyl phosphate + 5-amino-6-(D-ribitylamino)uracil = 6,7-dimethyl-8-(1-D-ribityl)lumazine + phosphate + 2 H2O + H(+). It participates in cofactor biosynthesis; riboflavin biosynthesis; riboflavin from 2-hydroxy-3-oxobutyl phosphate and 5-amino-6-(D-ribitylamino)uracil: step 1/2. Its function is as follows. Catalyzes the formation of 6,7-dimethyl-8-ribityllumazine by condensation of 5-amino-6-(D-ribitylamino)uracil with 3,4-dihydroxy-2-butanone 4-phosphate. This is the penultimate step in the biosynthesis of riboflavin. The chain is 6,7-dimethyl-8-ribityllumazine synthase from Frankia casuarinae (strain DSM 45818 / CECT 9043 / HFP020203 / CcI3).